Reading from the N-terminus, the 582-residue chain is Enhancer of polycomb-like protein 1 (582 aa).

Positions 238 to 295 form a coiled coil; that stretch reads RDAQSADKLRRLRKELEDARQLVALVRQRELARKEMLSMERQIFLQRSEVKEMKRKLN. The interval 323-351 is disordered; the sequence is PEQPKKKPAEAPAAQRPTAPQIRMPQKPG. A coiled-coil region spans residues 352 to 385; the sequence is TQAADDMQLLEDVQAEKENEILRDIKQNIAKHIK. Low complexity predominate over residues 539–555; the sequence is AQAHAQAQAQKRLQAEQ. The segment at 539-582 is disordered; sequence AQAHAQAQAQKRLQAEQTTTNNGPPNIGHTMGSNPGPGAVASTS.

Belongs to the enhancer of polycomb family. In terms of assembly, component of the NuA4 histone acetyltransferase complex.

It is found in the nucleus. Its function is as follows. Component of the NuA4 histone acetyltransferase complex which is involved in transcriptional activation of selected genes principally by acetylation of nucleosomal histone H4 and H2A. The NuA4 complex is also involved in DNA repair. Involved in gene silencing by neighboring heterochromatin, blockage of the silencing spreading along the chromosome, and required for cell cycle progression through G2/M. This Aspergillus fumigatus (strain ATCC MYA-4609 / CBS 101355 / FGSC A1100 / Af293) (Neosartorya fumigata) protein is Enhancer of polycomb-like protein 1 (epl1).